The sequence spans 434 residues: GTPase Obg (434 aa).

The 158-residue stretch at 1 to 158 (MFLDTAKIKV…RELQLELKIL (158 aa)) folds into the Obg domain. Residues 159–336 (ADVGLVGFPS…LLDATAELLD (178 aa)) enclose the OBG-type G domain. GTP contacts are provided by residues 165 to 172 (GFPSVGKS), 190 to 194 (FTTIV), 212 to 215 (DLPG), 282 to 285 (NKMD), and 317 to 319 (SGL). 2 residues coordinate Mg(2+): serine 172 and threonine 192. The 79-residue stretch at 356 to 434 (GFDEEEKAFE…IGKFEFEFVD (79 aa)) folds into the OCT domain.

Belongs to the TRAFAC class OBG-HflX-like GTPase superfamily. OBG GTPase family. In terms of assembly, monomer. Mg(2+) serves as cofactor.

The protein localises to the cytoplasm. In terms of biological role, an essential GTPase which binds GTP, GDP and possibly (p)ppGpp with moderate affinity, with high nucleotide exchange rates and a fairly low GTP hydrolysis rate. Plays a role in control of the cell cycle, stress response, ribosome biogenesis and in those bacteria that undergo differentiation, in morphogenesis control. This Streptococcus pneumoniae (strain Hungary19A-6) protein is GTPase Obg.